Consider the following 109-residue polypeptide: Movement protein TGB2 (109 aa).

The Cytoplasmic portion of the chain corresponds to 1 to 9; that stretch reads MPLTPPPDF. Residues 10 to 30 traverse the membrane as a helical segment; sequence TKVYLSAALGVSLALVVWLLI. The Lumenal portion of the chain corresponds to 31 to 72; it reads RSTLPVVGDRDHNLPHGGWYRDGTKSVFYNSPGRLNSIEARK. A helical membrane pass occupies residues 73–93; that stretch reads APLLGQPWAIVVLLVLLIWAS. Over 94–109 the chain is Cytoplasmic; that stretch reads HKLGRPNCRACAGSHT.

It belongs to the Tymovirales TGBp2 protein family.

It localises to the host endoplasmic reticulum membrane. Functionally, plays a role in viral cell-to-cell propagation, by facilitating genome transport to neighboring plant cells through plasmosdesmata,. The polypeptide is Movement protein TGB2 (Solanum tuberosum (Potato)).